The primary structure comprises 37 residues: DEEPKETCSDEMCVIYCKGEEYSTGVCDGPQKCKCSD.

Cystine bridges form between cysteine 8–cysteine 27, cysteine 13–cysteine 33, and cysteine 17–cysteine 35.

It belongs to the short scorpion toxin superfamily. Potassium channel inhibitor family. Alpha-KTx 11 subfamily. In terms of tissue distribution, expressed by the venom gland.

Its subcellular location is the secreted. Its function is as follows. Binds and inhibits voltage-sensitive potassium channels. Inhibits the vertebrate potassium channel Kv1.1/KCNA1 with low affinity. The polypeptide is Potassium channel toxin alpha-KTx 11.2 (Parabuthus villosus (Black hairy thick-tailed scorpion)).